Here is a 385-residue protein sequence, read N- to C-terminus: Zinc finger protein B385R (385 aa).

A C2H2-type zinc finger spans residues 166–190 (LQCPNCGCIQELMGTIFDETHFYNH).

Belongs to the asfivirus B385R family.

The sequence is that of Zinc finger protein B385R from Ornithodoros (relapsing fever ticks).